Consider the following 218-residue polypeptide: uncharacterized protein (218 aa).

The region spanning W4–S207 is the CN hydrolase domain.

This is an uncharacterized protein from Escherichia coli (strain K12).